Here is a 235-residue protein sequence, read N- to C-terminus: Demethylmenaquinone methyltransferase (235 aa).

S-adenosyl-L-methionine-binding positions include threonine 58, aspartate 79, and 106 to 107 (NA).

It belongs to the class I-like SAM-binding methyltransferase superfamily. MenG/UbiE family.

The enzyme catalyses a 2-demethylmenaquinol + S-adenosyl-L-methionine = a menaquinol + S-adenosyl-L-homocysteine + H(+). The protein operates within quinol/quinone metabolism; menaquinone biosynthesis; menaquinol from 1,4-dihydroxy-2-naphthoate: step 2/2. Functionally, methyltransferase required for the conversion of demethylmenaquinol (DMKH2) to menaquinol (MKH2). This chain is Demethylmenaquinone methyltransferase, found in Shouchella clausii (strain KSM-K16) (Alkalihalobacillus clausii).